The sequence spans 76 residues: Theta defensin subunit A (76 aa).

The N-terminal stretch at Met1–Ala22 is a signal peptide. The propeptide occupies Arg23 to Leu64. Residues Ala25–His45 form a disordered region. Low complexity predominate over residues Ala30–Ala44. Arg65 participates in a covalent cross-link: Cyclopeptide (Arg-Cys) (interchain with C-73 in subunit A); in form BTD-3. Arg65 participates in a covalent cross-link: Cyclopeptide (Arg-Cys) (interchain with C-73 in subunit B); in form BTD-1. Residue Arg65 forms a Cyclopeptide (Arg-Cys) (interchain with C-73 in subunit C); in form BTD-4 linkage. A Cyclopeptide (Arg-Cys) (interchain with C-73 in subunit D); in form BTD-7 cross-link involves residue Arg65. Residues Cys68 and Cys73 are joined by a disulfide bond. A Cyclopeptide (Cys-Arg) (interchain with R-65 in subunit A); in form BTD-3 cross-link involves residue Cys73. A Cyclopeptide (Cys-Arg) (interchain with R-65 in subunit B); in form BTD-1 cross-link involves residue Cys73. Cys73 is covalently cross-linked (Cyclopeptide (Cys-Arg) (interchain with R-65 in subunit C); in form BTD-4). Residue Cys73 forms a Cyclopeptide (Cys-Arg) (interchain with R-65 in subunit D); in form BTD-7 linkage. Residues Arg74–Leu76 constitute a propeptide that is removed on maturation.

The protein belongs to the alpha-defensin family. Theta subfamily. As to quaternary structure, BTD-1 is a cyclic heterodimer composed of subunits A and B; disulfide-linked. BTD-3 is a cyclic homodimer composed of two subunits A; disulfide-linked. BTD-4 is a cyclic heterodimer composed of subunits A and C; disulfide-linked. BTD-7 is a cyclic heterodimer composed of subunits A and D; disulfide-linked. In terms of processing, forms a cyclic peptide with subunit B (BTD-1), subunit A (BTD-3), subunit C (BTD-4), or subunit D (BTD-7). An additional intersubunit disulfide bond is formed.

Functionally, BTD-1, BTD-3, BTD-4 and BTD-7 have antimicrobial activity against the Gram-negative bacterium E.coli ML35, the Gram-positive bacterium S.aureus 502a, and the fungus C.albicans 16820. BTD-3 is more effective against E.coli than BTD-1, BTD-4 and BTD-7. The polypeptide is Theta defensin subunit A (BTDA) (Papio anubis (Olive baboon)).